The chain runs to 109 residues: Cell division protein ZapA (109 aa).

The stretch at 21 to 99 (PEQRDALNQA…IEQALLEQGR (79 aa)) forms a coiled coil.

It belongs to the ZapA family. Type 1 subfamily. In terms of assembly, homodimer. Interacts with FtsZ.

Its subcellular location is the cytoplasm. Its function is as follows. Activator of cell division through the inhibition of FtsZ GTPase activity, therefore promoting FtsZ assembly into bundles of protofilaments necessary for the formation of the division Z ring. It is recruited early at mid-cell but it is not essential for cell division. In Klebsiella pneumoniae subsp. pneumoniae (strain ATCC 700721 / MGH 78578), this protein is Cell division protein ZapA.